Here is a 446-residue protein sequence, read N- to C-terminus: Histidine--tRNA ligase (446 aa).

This sequence belongs to the class-II aminoacyl-tRNA synthetase family. In terms of assembly, homodimer.

The protein resides in the cytoplasm. It catalyses the reaction tRNA(His) + L-histidine + ATP = L-histidyl-tRNA(His) + AMP + diphosphate + H(+). In Paraburkholderia phymatum (strain DSM 17167 / CIP 108236 / LMG 21445 / STM815) (Burkholderia phymatum), this protein is Histidine--tRNA ligase.